The primary structure comprises 465 residues: Innexin-11 (465 aa).

4 helical membrane passes run 29–49 (LMTPNILLAFSVLISFKQFGG), 105–125 (QWVPFFLLLQAAFFRAPSYLW), 195–215 (SGFISWIYLFTKVLYFLNVFA), and 286–306 (IFVLLWFWYVILLLSSTVSLV). The disordered stretch occupies residues 433–465 (ISTSLMPDKDDIESSSTSSEEDQKRVSNVITNI).

Belongs to the pannexin family.

It is found in the cell membrane. The protein localises to the cell junction. The protein resides in the gap junction. Structural component of the gap junctions. The protein is Innexin-11 (inx-11) of Caenorhabditis elegans.